Reading from the N-terminus, the 591-residue chain is V-type ATP synthase alpha chain (591 aa).

233-240 (GPFGAGKT) is an ATP binding site.

This sequence belongs to the ATPase alpha/beta chains family.

It catalyses the reaction ATP + H2O + 4 H(+)(in) = ADP + phosphate + 5 H(+)(out). Produces ATP from ADP in the presence of a proton gradient across the membrane. The V-type alpha chain is a catalytic subunit. The chain is V-type ATP synthase alpha chain from Streptococcus pneumoniae (strain Hungary19A-6).